The sequence spans 1724 residues: Protein scribble homolog (1724 aa).

The sufficient for targeting to adherens junction stretch occupies residues 1 to 821; that stretch reads MLKCIPLWRC…MTVLRERMVE (821 aa). LRR repeat units lie at residues 11-34, 35-58, 59-81, 83-105, 107-127, 128-150, 151-174, 176-196, 197-219, 221-242, 244-265, 266-288, 289-311, 312-334, 336-357, 359-380, and 382-405; these read NRHVESVDKRHCSLTAVPDEIYRY, NRSLEELLLDANQLRELPKPFFRL, HNLRKLGLSDNEIQKLPPDVANF, QLVELDISRNDISEIPENIKFCQ, LEIADFSGNPLTRLPDGFTQL, RGLAHLSLNDVSLQSLPNDIGNL, SNLVTLELRENLLKSLPSSLSFLV, LEQLDLGSNVLEVLPDTLGAL, PNLRELWLDRNQLSSLPPELGNL, QLVCLDVSENRLSELPTEISGL, ALTDLLLSENLLEILPDSIGSL, KKLSILKVNQNRLVHLTDSIGEC, ENLTELMLTENLLQSLPRSLGKL, KKLTNLNVDRNRLSSVPAELGGC, SLNVLSLRDNRLGKLPPELANA, ELHVLDVAGNRLQNLPFALANL, and LKAMWLAENQSQPMLKFQTEDDEQ. Disordered regions lie at residues 451 to 484, 496 to 620, and 646 to 683; these read RDDSKHEEEDDETAADKRGLQRRATPHPSELKVM, YTAR…RKDT, and SHDGLSPTAHTPENERDGEDDEEEEEDEDEEDDLHTPF. The span at 518 to 534 shows a compositional bias: low complexity; the sequence is SNQSHDSQASSSTTSAT. Positions 554–567 are enriched in acidic residues; it reads VQEEEDLDEMEVEY. Over residues 574-583 the composition is skewed to basic and acidic residues; that stretch reads FAEEPIIRGG. Over residues 584 to 598 the composition is skewed to acidic residues; that stretch reads DEDDDYDNDDDDAER. Positions 611 to 620 are enriched in basic and acidic residues; sequence EKQRLIRKDT. Positions 661–678 are enriched in acidic residues; that stretch reads RDGEDDEEEEEDEDEEDD. PDZ domains lie at 731-818, 867-955, 1005-1094, and 1101-1193; these read TLSI…LRER, ATCL…DREQ, EVTL…RRDP, and EIVI…CDGF. Residues 955-995 are disordered; sequence QSSVGGASPRTRPHSPPPPEPSDSPEQEDGGDEHLGNHLNC. Disordered stretches follow at residues 1283-1407, 1414-1433, 1449-1468, and 1488-1555; these read LQKV…DRQK, KQQTPDKPKPRISLVGEDDL, REFMLDEDEEEEEEDLAKQV, and SLGS…GESA. The segment covering 1295–1306 has biased composition (basic and acidic residues); it reads FRIDSPVRDAAH. 3 stretches are compositionally biased toward polar residues: residues 1308–1329, 1346–1357, and 1364–1385; these read PHNSQSNIHFPSNANTKDNAST, PASQDGHSSPNP, and PINSQTTDLYSPRNNVSAKQPS. Basic and acidic residues predominate over residues 1395–1407; sequence HSPEQRSFKDRQK. Residues 1430–1461 are a coiled coil; it reads EDDLKKMKEEEAKRIEQRAREFMLDEDEEEEE. Acidic residues predominate over residues 1453 to 1463; that stretch reads LDEDEEEEEED. Residues 1490–1506 show a composition bias toward polar residues; it reads GSPTSRQCATPPNYSAT. Low complexity predominate over residues 1507–1518; sequence PPSHCGSSGPSS. Positions 1521–1538 are enriched in basic and acidic residues; the sequence is GKGDSQRNSVEDSFRLEQ. S1609 carries the post-translational modification Phosphoserine. Residues 1621–1684 form a disordered region; the sequence is IAKSKEGKKR…FMDESSSNAV (64 aa). Residues 1623–1632 are compositionally biased toward basic and acidic residues; that stretch reads KSKEGKKRGT.

Post-translationally, palmitoylated.

Its subcellular location is the cell membrane. It localises to the cell junction. The protein localises to the adherens junction. The protein resides in the cell projection. It is found in the lamellipodium. Its subcellular location is the cytoplasm. It localises to the postsynapse. The protein localises to the presynapse. In terms of biological role, scaffold protein involved in different aspects of polarized cells differentiation regulating epithelial and neuronal morphogenesis. Regulates the caudal migration of the nVII motor neurons. Required for convergent extension movements during gastrulation. The polypeptide is Protein scribble homolog (scrib) (Danio rerio (Zebrafish)).